The chain runs to 254 residues: Tubulin-specific chaperone B (254 aa).

The CAP-Gly domain maps to 182-225 (PLPLDVMGTWCGVEFPEAAGKNDGRINGVTLFGPVAPGHGSFVR). The tract at residues 234-254 (KDEESAEVEDVHDDVESDDEI) is disordered. A compositionally biased stretch (acidic residues) spans 237–254 (ESAEVEDVHDDVESDDEI).

It belongs to the TBCB family. Binds to monomeric alpha-tubulin.

It localises to the cytoplasm. It is found in the cytoskeleton. In terms of biological role, acts to sequester alpha-tubulin from interaction with beta-tubulin, raising the possibility that it plays a regulatory role in the formation of the tubulin heterodimer. This Saccharomyces cerevisiae (strain ATCC 204508 / S288c) (Baker's yeast) protein is Tubulin-specific chaperone B (ALF1).